Consider the following 71-residue polypeptide: Small ribosomal subunit protein bS21 (71 aa).

Belongs to the bacterial ribosomal protein bS21 family.

This chain is Small ribosomal subunit protein bS21, found in Shewanella sediminis (strain HAW-EB3).